The primary structure comprises 178 residues: ATP synthase subunit delta (178 aa).

Belongs to the ATPase delta chain family. As to quaternary structure, F-type ATPases have 2 components, F(1) - the catalytic core - and F(0) - the membrane proton channel. F(1) has five subunits: alpha(3), beta(3), gamma(1), delta(1), epsilon(1). F(0) has three main subunits: a(1), b(2) and c(10-14). The alpha and beta chains form an alternating ring which encloses part of the gamma chain. F(1) is attached to F(0) by a central stalk formed by the gamma and epsilon chains, while a peripheral stalk is formed by the delta and b chains.

The protein localises to the cell inner membrane. Its function is as follows. F(1)F(0) ATP synthase produces ATP from ADP in the presence of a proton or sodium gradient. F-type ATPases consist of two structural domains, F(1) containing the extramembraneous catalytic core and F(0) containing the membrane proton channel, linked together by a central stalk and a peripheral stalk. During catalysis, ATP synthesis in the catalytic domain of F(1) is coupled via a rotary mechanism of the central stalk subunits to proton translocation. This protein is part of the stalk that links CF(0) to CF(1). It either transmits conformational changes from CF(0) to CF(1) or is implicated in proton conduction. The protein is ATP synthase subunit delta of Nitrosomonas europaea (strain ATCC 19718 / CIP 103999 / KCTC 2705 / NBRC 14298).